Here is a 637-residue protein sequence, read N- to C-terminus: Chaperone protein DnaK (637 aa).

Position 198 is a phosphothreonine; by autocatalysis (Thr-198). The segment at 597–637 is disordered; the sequence is MYAKTSQAGAGPQPGAGPGTGGQGPGKKDEDVVDADFEEVK. Over residues 608 to 621 the composition is skewed to gly residues; it reads PQPGAGPGTGGQGP. A compositionally biased stretch (acidic residues) spans 627–637; it reads DVVDADFEEVK.

It belongs to the heat shock protein 70 family.

Its function is as follows. Acts as a chaperone. The sequence is that of Chaperone protein DnaK from Syntrophus aciditrophicus (strain SB).